Reading from the N-terminus, the 293-residue chain is Inhibitory synaptic factor 1 (293 aa).

Residues 1-26 (MNIRGAPDLGQPSDDPSSGGERERIR) are disordered. The stretch at 30–63 (KMVIGQLEGILRELKEVAKELREVVSQIDKLTSD) forms a coiled coil. 2 disordered regions span residues 120 to 186 (TPSD…RERV) and 200 to 293 (DDEE…RGKN). Polar residues predominate over residues 171–180 (VKSQLPQRTP). Residues 200–215 (DDEEGDGEQEVEEEEV) are compositionally biased toward acidic residues. 2 stretches are compositionally biased toward polar residues: residues 243 to 256 (SPLT…TLAP) and 264 to 286 (RNSS…TATR).

Belongs to the INSYN1 family. As to quaternary structure, interacts with GPHN.

The protein resides in the postsynaptic density. Functionally, component of the protein machinery at the inhibitory synapses, probably acting as a scaffold. Inhibitory synapses dampen neuronal activity through postsynaptic hyperpolarization. This synaptic inhibition is fundamental for the functioning of the central nervous system, shaping and orchestrating the flow of information through neuronal networks to generate a precise neural code. This Homo sapiens (Human) protein is Inhibitory synaptic factor 1.